Reading from the N-terminus, the 273-residue chain is Urease accessory protein UreD (273 aa).

It belongs to the UreD family. In terms of assembly, ureD, UreF and UreG form a complex that acts as a GTP-hydrolysis-dependent molecular chaperone, activating the urease apoprotein by helping to assemble the nickel containing metallocenter of UreC. The UreE protein probably delivers the nickel.

The protein localises to the cytoplasm. Required for maturation of urease via the functional incorporation of the urease nickel metallocenter. The protein is Urease accessory protein UreD of Rhizobium etli (strain ATCC 51251 / DSM 11541 / JCM 21823 / NBRC 15573 / CFN 42).